Here is a 463-residue protein sequence, read N- to C-terminus: Nitrogenase iron-molybdenum cofactor biosynthesis protein NifE (463 aa).

It belongs to the NifD/NifK/NifE/NifN family.

The protein operates within cofactor biosynthesis; Fe-Mo cofactor biosynthesis. Its function is as follows. This protein may play a role in the biosynthesis of the prosthetic group of nitrogenase (FeMo cofactor). The chain is Nitrogenase iron-molybdenum cofactor biosynthesis protein NifE (nifE2) from Methanosarcina barkeri.